The chain runs to 412 residues: NADH-quinone oxidoreductase subunit 4 (412 aa).

It belongs to the complex I 49 kDa subunit family. As to quaternary structure, NDH-1 is composed of at least 14 different subunits, Nqo1 to Nqo14. The complex has a L-shaped structure, with the hydrophobic arm (subunits Nqo7, Nqo8, Nqo10 to Nqo14) embedded in the inner membrane and the hydrophilic peripheral arm (subunits Nqo1 to Nqo6, Nqo9) protruding into the bacterial cytoplasm. The hydrophilic domain contains all the redox centers.

Its subcellular location is the cell inner membrane. It catalyses the reaction a quinone + NADH + 5 H(+)(in) = a quinol + NAD(+) + 4 H(+)(out). Functionally, NDH-1 shuttles electrons from NADH, via FMN and iron-sulfur (Fe-S) centers, to quinones in the respiratory chain. The immediate electron acceptor for the enzyme in this species is believed to be ubiquinone. Couples the redox reaction to proton translocation (for every two electrons transferred, four hydrogen ions are translocated across the cytoplasmic membrane), and thus conserves the redox energy in a proton gradient. This chain is NADH-quinone oxidoreductase subunit 4 (nqo4), found in Paracoccus denitrificans.